The primary structure comprises 750 residues: Penicillin-binding protein 2x (750 aa).

Residues 29–49 traverse the membrane as a helical segment; it reads LSLLSVFVFAIFLVNFAVIIG. The active-site Acyl-ester intermediate is S337. PASTA domains lie at 632 to 691 and 692 to 750; these read QQSP…ILSD and KAEE…TLGD.

It belongs to the transpeptidase family.

The protein resides in the cell membrane. Functionally, a transpeptidase that forms peptide cross-links between adjacent glycan strands in cell wall peptidoglycan (PG). Part of the divisome machinery that synthesizes the septal cross wall. Beta-lactams inactivate the PBPs by acylating an essential serine residue in the active site of these proteins. The chain is Penicillin-binding protein 2x (pbpX) from Streptococcus pneumoniae serotype 4 (strain ATCC BAA-334 / TIGR4).